The chain runs to 422 residues: Protein king tubby 2 (422 aa).

The segment at 49–169 (PSNPDQIISS…ASGHNDAEGD (121 aa)) is disordered. The segment covering 57 to 81 (SSGSPTTVTATGTTTGSVTTTPTSP) has biased composition (low complexity).

It belongs to the TUB family.

The protein resides in the cytoplasm. Its subcellular location is the nucleus. This is Protein king tubby 2 (king-tubby2) from Culex quinquefasciatus (Southern house mosquito).